The chain runs to 155 residues: Small ribosomal subunit protein uS7c (155 aa).

This sequence belongs to the universal ribosomal protein uS7 family. In terms of assembly, part of the 30S ribosomal subunit.

The protein localises to the plastid. It localises to the chloroplast. Its function is as follows. One of the primary rRNA binding proteins, it binds directly to 16S rRNA where it nucleates assembly of the head domain of the 30S subunit. The polypeptide is Small ribosomal subunit protein uS7c (rps7) (Chaetosphaeridium globosum (Charophycean green alga)).